The following is a 90-amino-acid chain: Small ribosomal subunit protein uS15 (90 aa).

This sequence belongs to the universal ribosomal protein uS15 family. In terms of assembly, part of the 30S ribosomal subunit. Forms a bridge to the 50S subunit in the 70S ribosome, contacting the 23S rRNA.

In terms of biological role, one of the primary rRNA binding proteins, it binds directly to 16S rRNA where it helps nucleate assembly of the platform of the 30S subunit by binding and bridging several RNA helices of the 16S rRNA. Forms an intersubunit bridge (bridge B4) with the 23S rRNA of the 50S subunit in the ribosome. This chain is Small ribosomal subunit protein uS15, found in Wolinella succinogenes (strain ATCC 29543 / DSM 1740 / CCUG 13145 / JCM 31913 / LMG 7466 / NCTC 11488 / FDC 602W) (Vibrio succinogenes).